We begin with the raw amino-acid sequence, 489 residues long: Protein SIP5 (489 aa).

The tract at residues methionine 1 to alanine 84 is disordered. Serine 13 is subject to Phosphoserine. Polar residues-rich tracts occupy residues serine 21–isoleucine 32 and leucine 51–leucine 69. Threonine 183 and threonine 433 each carry phosphothreonine. The segment at serine 419–proline 489 is disordered. Serine 436 is modified (phosphoserine). Threonine 438 bears the Phosphothreonine mark. Over residues glutamine 461–arginine 477 the composition is skewed to basic and acidic residues.

This sequence belongs to the SIP5 family. Interacts with NPA1, SNF1 and REG1.

The protein resides in the cytoplasm. May negatively regulate the SNF1 kinase by promoting the interaction of the REG1/GLC7 phosphatase complex with the kinase. Deletion of SIP5 promotes resistance to artemisinin, which is probably an indirect effect of an action on the electron transport chain. This Saccharomyces cerevisiae (strain ATCC 204508 / S288c) (Baker's yeast) protein is Protein SIP5 (SIP5).